A 155-amino-acid polypeptide reads, in one-letter code: Large ribosomal subunit protein uL30 (155 aa).

Belongs to the universal ribosomal protein uL30 family. As to quaternary structure, part of the 50S ribosomal subunit.

The sequence is that of Large ribosomal subunit protein uL30 from Cenarchaeum symbiosum (strain A).